The primary structure comprises 490 residues: Asparagine--tRNA ligase (490 aa).

It belongs to the class-II aminoacyl-tRNA synthetase family. In terms of assembly, homodimer.

The protein resides in the cytoplasm. The catalysed reaction is tRNA(Asn) + L-asparagine + ATP = L-asparaginyl-tRNA(Asn) + AMP + diphosphate + H(+). The chain is Asparagine--tRNA ligase from Rhodopirellula baltica (strain DSM 10527 / NCIMB 13988 / SH1).